We begin with the raw amino-acid sequence, 309 residues long: Foldase protein PrsA (309 aa).

The N-terminal stretch at 1–22 (MKTRSKLAAGFLTLMSVATLAA) is a signal peptide. Cys-23 carries the N-palmitoyl cysteine lipid modification. The S-diacylglycerol cysteine moiety is linked to residue Cys-23. The region spanning 146–241 (TPETSVQVIK…TSYYIIKVTD (96 aa)) is the PpiC domain.

This sequence belongs to the PrsA family.

The protein resides in the cell membrane. It carries out the reaction [protein]-peptidylproline (omega=180) = [protein]-peptidylproline (omega=0). Plays a major role in protein secretion by helping the post-translocational extracellular folding of several secreted proteins. This is Foldase protein PrsA from Streptococcus agalactiae serotype III (strain NEM316).